The chain runs to 331 residues: Lipoyl synthase (331 aa).

Residues 1–20 (MTTETNPAVTPAYNPSEKQK) form a disordered region. [4Fe-4S] cluster-binding residues include Cys71, Cys76, Cys82, Cys97, Cys101, Cys104, and Ser311. The Radical SAM core domain maps to 82-300 (CFGKGTATFM…EEEAYKMGFA (219 aa)).

Belongs to the radical SAM superfamily. Lipoyl synthase family. [4Fe-4S] cluster is required as a cofactor.

Its subcellular location is the cytoplasm. The catalysed reaction is [[Fe-S] cluster scaffold protein carrying a second [4Fe-4S](2+) cluster] + N(6)-octanoyl-L-lysyl-[protein] + 2 oxidized [2Fe-2S]-[ferredoxin] + 2 S-adenosyl-L-methionine + 4 H(+) = [[Fe-S] cluster scaffold protein] + N(6)-[(R)-dihydrolipoyl]-L-lysyl-[protein] + 4 Fe(3+) + 2 hydrogen sulfide + 2 5'-deoxyadenosine + 2 L-methionine + 2 reduced [2Fe-2S]-[ferredoxin]. Its pathway is protein modification; protein lipoylation via endogenous pathway; protein N(6)-(lipoyl)lysine from octanoyl-[acyl-carrier-protein]: step 2/2. Functionally, catalyzes the radical-mediated insertion of two sulfur atoms into the C-6 and C-8 positions of the octanoyl moiety bound to the lipoyl domains of lipoate-dependent enzymes, thereby converting the octanoylated domains into lipoylated derivatives. The chain is Lipoyl synthase from Janthinobacterium sp. (strain Marseille) (Minibacterium massiliensis).